A 557-amino-acid chain; its full sequence is Interferon alpha/beta receptor 1 (557 aa).

Residues 1 to 27 (MMVVLLGATTLVLVAVAPWVLSAAAGG) form the signal peptide. Residues 28 to 436 (KNLKSPQKVE…EKTKPGNTSK (409 aa)) are Extracellular-facing. Fibronectin type-III domains are found at residues 32–126 (SPQK…FRKA), 127–227 (QIGP…TVEN), 231–329 (PPEN…TEIQ), and 331–432 (FLLP…TKPG). N-linked (GlcNAc...) asparagine glycans are attached at residues N50, N58, N81, N88, N110, and N172. C79 and C87 are disulfide-bonded. An intrachain disulfide couples C199 to C220. An N-linked (GlcNAc...) asparagine glycan is attached at N254. C283 and C291 are oxidised to a cystine. 5 N-linked (GlcNAc...) asparagine glycosylation sites follow: N313, N314, N376, N416, and N433. C403 and C426 are joined by a disulfide. A helical membrane pass occupies residues 437-457 (IWLIVGICIALFALPFVIYAA). At 458 to 557 (KVFLRCINYV…TSEELQQDFV (100 aa)) the chain is on the cytoplasmic side. The S-palmitoyl cysteine moiety is linked to residue C463. A phosphotyrosine; by TYK2 mark is found at Y466 and Y481. The segment at 491-500 (LLSTSEEQIE) is important for interaction with TYK2. Phosphoserine is present on S495. Glycyl lysine isopeptide (Lys-Gly) (interchain with G-Cter in ubiquitin) cross-links involve residues K501, K525, and K526. The tract at residues 516–557 (ETNQTDEDHKKYSSQTSQDSGNYSNEDESESKTSEELQQDFV) is disordered. Positions 528-539 (SSQTSQDSGNYS) are enriched in polar residues. At S535 the chain carries Phosphoserine.

This sequence belongs to the type II cytokine receptor family. Heterodimer with IFNAR2; forming the receptor for type I interferon. Interacts with TYK2. Interacts with STAT1 and STAT2; the interaction requires its phosphorylation at Tyr-466. Interacts (serine-phosphorylated form) with FBXW11, the substrate recognition component of a SCF (SKP1-CUL1-F-box protein) E3 ubiquitin-protein ligase complex. Interacts with SHMT2; this promotes interaction with ABRAXAS2 and the BRISC complex. Interacts with TRIM10; this interaction prevents association between IFNAR1 and TYK2. Post-translationally, ubiquitinated, leading to its internalization and degradation. Polyubiquitinated via 'Lys-48'-linked and 'Lys-63'-linked ubiquitin chains, leading to receptor internalization and lysosomal degradation. The 'Lys-63'-linked ubiquitin chains are cleaved off by the BRISC complex. Phosphorylated on tyrosine residues in response to interferon-binding: phosphorylation by TYK2 tyrosine kinase creates docking sites for STAT proteins. Phosphorylated on serine residues in response to interferon binding; this promotes interaction with FBXW11 and ubiquitination. In terms of processing, palmitoylation at Cys-463 is required for the activation of STAT1 and STAT2. As to expression, IFN receptors are present in all tissues and even on the surface of most IFN-resistant cells. Isoform 1, isoform 2 and isoform 3 are expressed in the IFN-alpha sensitive myeloma cell line U266B1. Isoform 2 and isoform 3 are expressed in the IFN-alpha resistant myeloma cell line U266R. Isoform 1 is not expressed in IFN-alpha resistant myeloma cell line U266R.

Its subcellular location is the cell membrane. The protein localises to the late endosome. It localises to the lysosome. Functionally, together with IFNAR2, forms the heterodimeric receptor for type I interferons (including interferons alpha, beta, epsilon, omega and kappa). Type I interferon binding activates the JAK-STAT signaling cascade, resulting in transcriptional activation or repression of interferon-regulated genes that encode the effectors of the interferon response. Mechanistically, type I interferon-binding brings the IFNAR1 and IFNAR2 subunits into close proximity with one another, driving their associated Janus kinases (JAKs) (TYK2 bound to IFNAR1 and JAK1 bound to IFNAR2) to cross-phosphorylate one another. The activated kinases phosphorylate specific tyrosine residues on the intracellular domains of IFNAR1 and IFNAR2, forming docking sites for the STAT transcription factors. STAT proteins are then phosphorylated by the JAKs, promoting their translocation into the nucleus to regulate expression of interferon-regulated genes. Can also act independently of IFNAR2: form an active IFNB1 receptor by itself and activate a signaling cascade that does not involve activation of the JAK-STAT pathway. This chain is Interferon alpha/beta receptor 1 (IFNAR1), found in Homo sapiens (Human).